Here is a 228-residue protein sequence, read N- to C-terminus: Phosphatidate cytidylyltransferase (228 aa).

6 helical membrane-spanning segments follow: residues 31–51, 65–85, 93–113, 131–151, 165–185, and 206–226; these read FVVA…LVGL, IHYL…LIFL, LVIM…MIGG, WTGL…VSLI, IYLF…DLFI, and GVLD…GINI.

The protein belongs to the CDS family.

Its subcellular location is the cell membrane. It carries out the reaction a 1,2-diacyl-sn-glycero-3-phosphate + CTP + H(+) = a CDP-1,2-diacyl-sn-glycerol + diphosphate. It participates in phospholipid metabolism; CDP-diacylglycerol biosynthesis; CDP-diacylglycerol from sn-glycerol 3-phosphate: step 3/3. The protein is Phosphatidate cytidylyltransferase (cdsA) of Rickettsia typhi (strain ATCC VR-144 / Wilmington).